Consider the following 284-residue polypeptide: Tropomyosin, smooth muscle/fibroblast CTM1 (284 aa).

Residues 1–284 (MEAIKKKMTM…DVTLQGIGDL (284 aa)) are a coiled coil. Residues 18–38 (AIDRAEQAETDKKSAEDKATG) form a disordered region.

This sequence belongs to the tropomyosin family. In terms of assembly, homodimer. As to expression, predominantly expressed in body wall muscle and heart, low in intestine, ovary and larval tail muscle.

The function of tropomyosin in smooth muscle and non-muscle cells is not clear. The polypeptide is Tropomyosin, smooth muscle/fibroblast CTM1 (CTM1) (Ciona intestinalis (Transparent sea squirt)).